We begin with the raw amino-acid sequence, 563 residues long: Arginine--tRNA ligase (563 aa).

The 'HIGH' region motif lies at 120-130 (PNIAKPFHIGH).

The protein belongs to the class-I aminoacyl-tRNA synthetase family. In terms of assembly, monomer.

Its subcellular location is the cytoplasm. The enzyme catalyses tRNA(Arg) + L-arginine + ATP = L-arginyl-tRNA(Arg) + AMP + diphosphate. In Clostridium botulinum (strain Okra / Type B1), this protein is Arginine--tRNA ligase.